Here is a 98-residue protein sequence, read N- to C-terminus: Feather keratin 3 (98 aa).

Belongs to the avian keratin family. In terms of assembly, the avian keratins (F-ker, S-ker, C-ker and B-ker) are a complex mixture of very similar polypeptides.

This is Feather keratin 3 from Gallus gallus (Chicken).